The chain runs to 385 residues: Leucine aminopeptidase 1 (385 aa).

The signal sequence occupies residues 1-20 (MKLPSLLSLGVAASTTIVAA). A propeptide spanning residues 21 to 87 (VPDQKPIGDT…FPKTFAQTTV (67 aa)) is cleaved from the precursor. N177 carries an N-linked (GlcNAc...) asparagine glycan. Positions 185, 204, 243, and 270 each coordinate Zn(2+). An intrachain disulfide couples C319 to C323. H352 is a Zn(2+) binding site.

This sequence belongs to the peptidase M28 family. M28E subfamily. Monomer. The cofactor is Zn(2+).

It is found in the secreted. Functionally, extracellular aminopeptidase that allows assimilation of proteinaceous substrates. In Ajellomyces capsulatus (strain NAm1 / WU24) (Darling's disease fungus), this protein is Leucine aminopeptidase 1 (LAP1).